We begin with the raw amino-acid sequence, 250 residues long: Triosephosphate isomerase (250 aa).

A substrate-binding site is contributed by 9-11 (NWK). H96 acts as the Electrophile in catalysis. E168 acts as the Proton acceptor in catalysis. Substrate contacts are provided by residues G174, S216, and 237–238 (GG).

It belongs to the triosephosphate isomerase family. As to quaternary structure, homodimer.

Its subcellular location is the cytoplasm. It catalyses the reaction D-glyceraldehyde 3-phosphate = dihydroxyacetone phosphate. Its pathway is carbohydrate biosynthesis; gluconeogenesis. It functions in the pathway carbohydrate degradation; glycolysis; D-glyceraldehyde 3-phosphate from glycerone phosphate: step 1/1. In terms of biological role, involved in the gluconeogenesis. Catalyzes stereospecifically the conversion of dihydroxyacetone phosphate (DHAP) to D-glyceraldehyde-3-phosphate (G3P). This Leptospira interrogans serogroup Icterohaemorrhagiae serovar Lai (strain 56601) protein is Triosephosphate isomerase.